The sequence spans 728 residues: Catalase-peroxidase 1 (728 aa).

The N-terminal stretch at 1–22 (MDKTQSSQGKCPVMHGANSAVA) is a signal peptide. The segment at residues 97-225 (WHSAGTYRVA…LAAVMMGLIY (129 aa)) is a cross-link (tryptophyl-tyrosyl-methioninium (Trp-Tyr) (with M-251)). The active-site Proton acceptor is the histidine 98. The tryptophyl-tyrosyl-methioninium (Tyr-Met) (with W-97) cross-link spans 225-251 (YVNPEGVDGKPDPLRTAQDVRVTFARM). Residue histidine 266 coordinates heme b.

This sequence belongs to the peroxidase family. Peroxidase/catalase subfamily. Homodimer or homotetramer. The cofactor is heme b. In terms of processing, formation of the three residue Trp-Tyr-Met cross-link is important for the catalase, but not the peroxidase activity of the enzyme.

The catalysed reaction is H2O2 + AH2 = A + 2 H2O. It carries out the reaction 2 H2O2 = O2 + 2 H2O. Functionally, bifunctional enzyme with both catalase and broad-spectrum peroxidase activity. The protein is Catalase-peroxidase 1 of Shewanella sp. (strain ANA-3).